The following is a 294-amino-acid chain: Release factor glutamine methyltransferase (294 aa).

Residues Gly131–Gly135, Asp154, and Asn202 contribute to the S-adenosyl-L-methionine site. Substrate is bound at residue Asn202–Tyr205.

Belongs to the protein N5-glutamine methyltransferase family. PrmC subfamily.

The catalysed reaction is L-glutaminyl-[peptide chain release factor] + S-adenosyl-L-methionine = N(5)-methyl-L-glutaminyl-[peptide chain release factor] + S-adenosyl-L-homocysteine + H(+). In terms of biological role, methylates the class 1 translation termination release factors RF1/PrfA and RF2/PrfB on the glutamine residue of the universally conserved GGQ motif. This chain is Release factor glutamine methyltransferase, found in Chlorobaculum tepidum (strain ATCC 49652 / DSM 12025 / NBRC 103806 / TLS) (Chlorobium tepidum).